The following is a 166-amino-acid chain: Thiamine precursor transporter HmpT (166 aa).

Helical transmembrane passes span 14 to 34 (LLAIWTALTFVLGRLFTFPIP), 35 to 55 (GSAGNILTLLDVGIYTAVFLF), 62 to 82 (IIGGFAAFLLDLTAGFSNYMF), 105 to 125 (FLLSLLVMVGGYFIVGGLMYG), and 126 to 146 (WGSAIAGLWVNIVQVIVGFVL).

In terms of assembly, in E.coli forms a stable energy-coupling factor (ECF) transporter complex composed of 2 membrane-embedded substrate-binding protein (S component), 2 ATP-binding proteins (A and A' components) and 2 transmembrane proteins (T component), probably with a stoichiometry of 2:1:1:2. May be able to interact with more than 1 S component at a time.

It localises to the cell membrane. Probably a thiamine precursor-binding protein that interacts with the energy-coupling factor (ECF) ABC-transporter complex. Unlike classic ABC transporters this ECF transporter provides the energy necessary to transport a number of different substrates. The substrates themselves are bound by transmembrane, not extracytoplasmic soluble proteins. The sequence is that of Thiamine precursor transporter HmpT (hmpT) from Lactococcus lactis subsp. cremoris (strain MG1363).